The primary structure comprises 249 residues: Vesicle-associated membrane protein-associated protein A (249 aa).

Residue Ala2 is modified to N-acetylalanine. Residues 2–227 (ASASGTMAKH…VSFRENVTSP (226 aa)) are Cytoplasmic-facing. The MSP domain maps to 14–131 (ILVLDPPTDL…MDSKLRCVFE (118 aa)). Residues 50 to 53 (KVKT) form a phosphorylated FFAT motif binding region. N6-acetyllysine is present on Lys125. A Phosphoserine modification is found at Ser166. A coiled-coil region spans residues 169-205 (DTETRKLVEECKRLQGEMMKLSEENRLLRDEGLRLRK). Residue Thr170 is modified to Phosphothreonine. Residues Ser214, Ser216, and Ser219 each carry the phosphoserine modification. The chain crosses the membrane as a helical; Anchor for type IV membrane protein span at residues 228 to 248 (LPSLLVVIAAIFIGFFLGKFI).

It belongs to the VAMP-associated protein (VAP) (TC 9.B.17) family. As to quaternary structure, homodimer; disulfide-linked. Heterodimer with VAPB. Interacts with VAMP1, VAMP2, STX1A, BET1, SEC22C and with the C-terminal domain of OCLN. Interacts (via MSP domain) with OSBPL1A (via FFAT motif). Interacts (via MSP domain) with ZFYVE27; may retain ZFYVE27 in the endoplasmic reticulum and regulate its function in cell projections formation. Interacts with OSBP. Interacts (via C-terminus) with RSAD2/viperin (via C-terminus). Interacts with IFITM3. Interacts with OSBPL3 (phosphorylated form). Interacts with KIF5A in a ZFYVE27-dependent manner. Interacts (via MSP domain) with STARD3 (via phosphorylated FFAT motif); this interaction recruits VAPA to the endosome. Interacts with STARD3NL (via FFAT motif). Interacts with CERT1. Interacts with PLEKHA3 and SACM1L to form a ternary complex. Interacts with VPS13A (via FFAT motif). Interacts with RB1CC1 (via phosphorylated FFAT motif), MIGA2 (via phosphorylated FFAT motif), RMDN3 (via phosphorylated FFAT motif), KCNB1 (via phosphorylated FFAT motif) and KCNB2 (via phosphorylated FFAT motif). Interacts (via MSP domain) with WDR44 (via FFAT-like motif); the interactions connect the endoplasmic reticulum (ER) with the endosomal tubule.

It localises to the endoplasmic reticulum membrane. Its subcellular location is the cell junction. The protein localises to the tight junction. The protein resides in the cell membrane. Its function is as follows. Endoplasmic reticulum (ER)-anchored protein that mediates the formation of contact sites between the ER and endosomes via interaction with FFAT motif-containing proteins such as STARD3 or WDR44. STARD3-VAPA interaction enables cholesterol transfer from the ER to endosomes. Via interaction with WDR44 participates in neosynthesized protein export. In addition, recruited to the plasma membrane through OSBPL3 binding. The OSBPL3-VAPA complex stimulates RRAS signaling which in turn attenuates integrin beta-1 (ITGB1) activation at the cell surface. With OSBPL3, may regulate ER morphology. May play a role in vesicle trafficking. The sequence is that of Vesicle-associated membrane protein-associated protein A from Bos taurus (Bovine).